Consider the following 356-residue polypeptide: 3-dehydroquinate synthase (356 aa).

NAD(+)-binding positions include 106–110 (GVVGD), 130–131 (TT), Lys-143, and Lys-152. Residues Glu-185, His-248, and His-265 each contribute to the Zn(2+) site.

This sequence belongs to the sugar phosphate cyclases superfamily. Dehydroquinate synthase family. The cofactor is Co(2+). Zn(2+) serves as cofactor. It depends on NAD(+) as a cofactor.

It localises to the cytoplasm. It carries out the reaction 7-phospho-2-dehydro-3-deoxy-D-arabino-heptonate = 3-dehydroquinate + phosphate. The protein operates within metabolic intermediate biosynthesis; chorismate biosynthesis; chorismate from D-erythrose 4-phosphate and phosphoenolpyruvate: step 2/7. In terms of biological role, catalyzes the conversion of 3-deoxy-D-arabino-heptulosonate 7-phosphate (DAHP) to dehydroquinate (DHQ). This chain is 3-dehydroquinate synthase, found in Thermoanaerobacter pseudethanolicus (strain ATCC 33223 / 39E) (Clostridium thermohydrosulfuricum).